The chain runs to 61 residues: UPF0434 protein PA14_25520 (61 aa).

It belongs to the UPF0434 family.

The polypeptide is UPF0434 protein PA14_25520 (Pseudomonas aeruginosa (strain UCBPP-PA14)).